The primary structure comprises 784 residues: Toll-like receptor 2 (784 aa).

An N-terminal signal peptide occupies residues 1 to 18 (MPHTLWMVWVLGVIISLS). Residues 19-587 (KEESSNQASL…VRLSVSECHR (569 aa)) lie on the Extracellular side of the membrane. Cysteines 30 and 36 form a disulfide. 19 LRR repeats span residues 54 to 77 (VKSLDLSNNRITYISNSDLQRYVN), 78 to 101 (LQALVLTSNGINTIEEDSFSSLGR), 102 to 125 (LEHLDLSYNYLSNLSSSWFKPLSS), 126 to 150 (LKFLNLLGNPYKTLGETSLFSHLTK), 151 to 175 (LRILRVGNMDTFTKIQRKDFAGLTF), 176 to 199 (LEELEIDASDLQSYEPKSLKSIQN), 200 to 223 (VSHLILHMKQHILLLEIFVDLTSS), 224 to 250 (VECLELRDTDLDTFHFSELSTGETNSL), 251 to 278 (IKKFTFRNVKITDESLFQVMKLLSQISG), 279 to 308 (LLELEFDDCTLNGVGDFRGSDNDRVIDPGK), 309 to 337 (VETVTIRRLHIPQFYSFNDLSTLYPLTER), 338 to 361 (VKRITVENSKVFLVPCLLSRHLKS), 362 to 388 (LEYLDLSENLMVEEYLKNSACEDAWPS), 389 to 414 (LQTLILRQNHLASLGKTGETLLTLKN), 415 to 437 (LTNLDISKNTFHYMPETCQWPEK), 438 to 457 (MKYLNLSSTRIHSVTGCIPK), 458 to 478 (TLEILDISNNNLNLFSLNLPQ), 479 to 500 (LKELYISRNKLMTLPDASLLPM), and 501 to 524 (LLVLKISRNTITTFSKEQLDSFHT). Asn114 carries N-linked (GlcNAc...) asparagine glycosylation. N-linked (GlcNAc...) asparagine glycosylation occurs at Asn199. Residues Cys353 and Cys382 are joined by a disulfide bond. Asn414 carries an N-linked (GlcNAc...) asparagine glycan. A disulfide bridge links Cys432 with Cys454. Asn442 carries an N-linked (GlcNAc...) asparagine glycan. The region spanning 525–579 (LKTLEAGGNNFICSCEFLSFTQEQQALAKVLVDWPANYLCDSPSHVRGQRVQDVR) is the LRRCT domain. Residues 588–608 (AALVSGMCCALFLLILLMGVL) traverse the membrane as a helical segment. At 609–784 (CHRFHGLWYM…WVNLRAAIKS (176 aa)) the chain is on the cytoplasmic side. A TIR domain is found at 639–782 (ICYDAFVSYS…GFWVNLRAAI (144 aa)). Lys754 is covalently cross-linked (Glycyl lysine isopeptide (Lys-Gly) (interchain with G-Cter in ubiquitin)). The ATG16L1-binding motif motif lies at 761-778 (YLEWPMDEARQEGFWVNL).

Belongs to the Toll-like receptor family. Interacts with LY96, TLR1 and TLR6 (via extracellular domain). TLR2 seems to exist in heterodimers with either TLR1 or TLR6 before stimulation by the ligand. The heterodimers form bigger oligomers in response to their corresponding ligands as well as further heterotypic associations with other receptors such as CD14 and/or CD36. Binds MYD88 (via TIR domain). Interacts with TICAM1. Interacts with CNPY3. Interacts with ATG16L1. Interacts with PPP1R11. Interacts with TICAM2. Interacts with TIRAP. Post-translationally, ubiquitinated at Lys-754 by PPP1R11, leading to its degradation. Deubiquitinated by USP2. Glycosylation of Asn-442 is critical for secretion of the N-terminal ectodomain of TLR2.

Its subcellular location is the membrane. It localises to the cytoplasmic vesicle. The protein resides in the phagosome membrane. The protein localises to the membrane raft. Functionally, cooperates with LY96 to mediate the innate immune response to bacterial lipoproteins and other microbial cell wall components. Cooperates with TLR1 or TLR6 to mediate the innate immune response to bacterial lipoproteins or lipopeptides. Acts via MYD88 and TRAF6, leading to NF-kappa-B activation, cytokine secretion and the inflammatory response. May also promote apoptosis in response to lipoproteins. Forms activation clusters composed of several receptors depending on the ligand, these clusters trigger signaling from the cell surface and subsequently are targeted to the Golgi in a lipid-raft dependent pathway. Forms the cluster TLR2:TLR6:CD14:CD36 in response to diacylated lipopeptides and TLR2:TLR1:CD14 in response to triacylated lipopeptides. The protein is Toll-like receptor 2 (TLR2) of Macaca fascicularis (Crab-eating macaque).